The primary structure comprises 503 residues: N-fatty-acyl-amino acid synthase/hydrolase PM20D1 (503 aa).

Positions 1–24 are cleaved as a signal peptide; the sequence is MAELLASLPAWAAVLLLFFATVSG. Asn-72 carries N-linked (GlcNAc...) asparagine glycosylation. A Zn(2+)-binding site is contributed by His-125. The active site involves Asp-127. A Zn(2+)-binding site is contributed by Asp-157. The active-site Proton acceptor is the Glu-191. 2 residues coordinate Zn(2+): Glu-192 and Asp-218. Asn-443 carries N-linked (GlcNAc...) asparagine glycosylation. His-465 contributes to the Zn(2+) binding site.

This sequence belongs to the peptidase M20A family. Requires Zn(2+) as cofactor. In terms of tissue distribution, in addition to being detected in blood (at protein level), PM20D1 is also highly expressed in other tissues including brown adipocytes, liver and kidney. It is also expressed in small intestine, large intestine, heart and pancreas.

The protein localises to the secreted. The enzyme catalyses an N-acyl-L-amino acid + H2O = an L-alpha-amino acid + a carboxylate. It catalyses the reaction an N-acyl-aromatic L-alpha-amino acid + H2O = an aromatic L-alpha-amino acid + a carboxylate. The catalysed reaction is N-(5Z,8Z,11Z,14Z)-eicosatetraenoyl-glycine + H2O = (5Z,8Z,11Z,14Z)-eicosatetraenoate + glycine. It carries out the reaction N-hexadecanoyl-L-phenylalanine + H2O = hexadecanoate + L-phenylalanine. The enzyme catalyses N-octadecanoyl-L-phenylalanine + H2O = octadecanoate + L-phenylalanine. It catalyses the reaction N-(4Z,7Z,10Z,13Z,16Z,19Z-docosahexaenoyl)-L-phenylalanine + H2O = (4Z,7Z,10Z,13Z,16Z,19Z)-docosahexaenoate + L-phenylalanine. The catalysed reaction is N-(9Z-octadecenoyl)-L-asparagine + H2O = L-asparagine + (9Z)-octadecenoate. It carries out the reaction (9Z)-octadecenoate + glycine = N-(9Z-octadecenoyl)glycine + H2O. The enzyme catalyses N-(9Z-octadecenoyl)-L-lysine + H2O = L-lysine + (9Z)-octadecenoate. It catalyses the reaction N-(9Z-octadecenoyl)-L-methionine + H2O = (9Z)-octadecenoate + L-methionine. The catalysed reaction is N-(9Z-octadecenoyl)-L-serine + H2O = L-serine + (9Z)-octadecenoate. It carries out the reaction N-(9Z-octadecenoyl)-L-tryptophan + H2O = L-tryptophan + (9Z)-octadecenoate. The enzyme catalyses N-(9Z-octadecenoyl)-L-tyrosine + H2O = L-tyrosine + (9Z)-octadecenoate. It catalyses the reaction N-(9Z-octadecenoyl)-L-glutamine + H2O = L-glutamine + (9Z)-octadecenoate. The catalysed reaction is N-(5Z,8Z,11Z,14Z-eicosatetraenoyl)-L-serine + H2O = (5Z,8Z,11Z,14Z)-eicosatetraenoate + L-serine. It carries out the reaction (5Z,8Z,11Z,14Z)-eicosatetraenoate + L-phenylalanine = N-(5Z,8Z,11Z,14Z-eicosatetraenoyl)-L-phenylalanine + H2O. The enzyme catalyses N-(9Z-octadecenoyl)-L-leucine + H2O = L-leucine + (9Z)-octadecenoate. It catalyses the reaction L-phenylalanine + (9Z)-octadecenoate = N-(9Z-octadecenoyl)-L-phenylalanine + H2O. It functions in the pathway amino-acid metabolism. It participates in energy metabolism; electron transfer. Its pathway is lipid metabolism; fatty acid metabolism. Lipoproteins are powerful coactivators of PM20D1 activity in vitro and NAA biosynthesis in vivo. Its function is as follows. Secreted enzyme that regulates the endogenous N-fatty acyl amino acid (NAAs) tissue and circulating levels by functioning as a bidirectional NAA synthase/hydrolase. It condenses free fatty acids and free amino acids to generate NAAs and bidirectionally catalyzes the reverse hydrolysis reaction. Some of these NAAs stimulate oxidative metabolism via mitochondrial uncoupling, increasing energy expenditure in a UPC1-independent manner. Thereby, this secreted protein may indirectly regulate whole body energy expenditure. PM20D1 circulates in tight association with both low- and high-density (LDL and HDL,respectively) lipoprotein particles. The polypeptide is N-fatty-acyl-amino acid synthase/hydrolase PM20D1 (Mus musculus (Mouse)).